A 185-amino-acid polypeptide reads, in one-letter code: uncharacterized protein (185 aa).

The N-terminal stretch at 1–29 (MKNQEIIEVKSKMFLRIWAFVGSAGMGLA) is a signal peptide. A lipid anchor (N-palmitoyl cysteine) is attached at Cys-30. Residue Cys-30 is the site of S-diacylglycerol cysteine attachment. A helical membrane pass occupies residues 45 to 67 (YLLAIPAGFLFTLFCLYLFIIFF).

It to B.subtilis YfjE.

The protein resides in the cell membrane. This is an uncharacterized protein from Bacillus subtilis (strain 168).